Reading from the N-terminus, the 261-residue chain is Protein phosphatase inhibitor 2 (261 aa).

A compositionally biased stretch (basic and acidic residues) spans 1-16; the sequence is MNKDEEFLEEHHYKDD. Residues 1–150 are required for binding to pppB; it reads MNKDEEFLEE…TPYHYYESEE (150 aa). Residues 1-261 form a disordered region; it reads MNKDEEFLEE…LNANLSDDEQ (261 aa). Positions 17–60 are enriched in acidic residues; that stretch reads DAIEGEEEQGEEEESDLDDDMYNIDGETNDDDDDDEAEDEESSE. The span at 123-134 shows a compositional bias: polar residues; the sequence is LTINDMNKSSTM. Residues 150–242 adopt a coiled-coil conformation; sequence EETDESKKYL…KKFDNLRKAH (93 aa). Positions 154-163 are enriched in basic and acidic residues; that stretch reads ESKKYLENKF. Residues 195–206 show a composition bias toward basic residues; sequence DKKKKKKNLKIH. Over residues 212–225 the composition is skewed to acidic residues; the sequence is DDNDDNEDEDEDET. Residues 226–250 show a composition bias toward basic and acidic residues; the sequence is EEKKENKKKFDNLRKAHYNEFKVVR.

This sequence belongs to the protein phosphatase inhibitor 2 family. Interacts with pppB.

In terms of biological role, inhibitor of protein-phosphatase 1 (PP1). The chain is Protein phosphatase inhibitor 2 (dpiA) from Dictyostelium discoideum (Social amoeba).